A 188-amino-acid chain; its full sequence is MKVIASTLRKGNVVDKDGKLYVILTAENIHPGKGTPVTQLDMRRITDGVKISERYRTTEQVERAFVEDRDHTFLYQDGEGYHFMNPENYEQLAVPEDVVGDAAPYLQEGMVVTLSTHNGVPLAIELPQRVTLEIVETEPVTKGQTASSSYKPAILSNGVKTSVPPHITTGTRVVIMTADGAYVERAKD.

The protein belongs to the elongation factor P family.

It localises to the cytoplasm. It functions in the pathway protein biosynthesis; polypeptide chain elongation. Involved in peptide bond synthesis. Stimulates efficient translation and peptide-bond synthesis on native or reconstituted 70S ribosomes in vitro. Probably functions indirectly by altering the affinity of the ribosome for aminoacyl-tRNA, thus increasing their reactivity as acceptors for peptidyl transferase. The polypeptide is Elongation factor P (Methylorubrum populi (strain ATCC BAA-705 / NCIMB 13946 / BJ001) (Methylobacterium populi)).